Consider the following 219-residue polypeptide: Elongation factor Ts (219 aa).

The tract at residues 82-85 (TDFV) is involved in Mg(2+) ion dislocation from EF-Tu.

It belongs to the EF-Ts family.

The protein localises to the cytoplasm. In terms of biological role, associates with the EF-Tu.GDP complex and induces the exchange of GDP to GTP. It remains bound to the aminoacyl-tRNA.EF-Tu.GTP complex up to the GTP hydrolysis stage on the ribosome. The polypeptide is Elongation factor Ts (Gloeobacter violaceus (strain ATCC 29082 / PCC 7421)).